Consider the following 2073-residue polypeptide: Dedicator of cytokinesis protein 11 (2073 aa).

Phosphoserine is present on Ser12. Position 16 is a phosphothreonine (Thr16). A phosphoserine mark is found at Ser23 and Ser161. A PH domain is found at 165 to 272 (GVIKQGWLHK…WLITLKKIIQ (108 aa)). Phosphotyrosine is present on Tyr248. 3 positions are modified to phosphoserine: Ser306, Ser440, and Ser445. In terms of domain architecture, C2 DOCK-type spans 640 to 818 (KNHLYVYPLQ…PLLKIKSHLE (179 aa)). The segment at 1226-1267 (FQNGHGIKREDSRGSLIPEGATGFPDQGNTGENTRQSSTRSS) is disordered. A phosphoserine mark is found at Ser1237 and Ser1240. A DOCKER domain is found at 1609–2036 (KSYASTPELR…LSDIIHEQIL (428 aa)).

The protein belongs to the DOCK family. As to quaternary structure, interacts with CDC42.

In terms of biological role, guanine nucleotide-exchange factor (GEF) that activates CDC42 by exchanging bound GDP for free GTP. Required for marginal zone (MZ) B-cell development, is associated with early bone marrow B-cell development, MZ B-cell formation, MZ B-cell number and marginal metallophilic macrophages morphology. Facilitates filopodia formation through the activation of CDC42. This Homo sapiens (Human) protein is Dedicator of cytokinesis protein 11.